The primary structure comprises 251 residues: Adenosylcobinamide-GDP ribazoletransferase (251 aa).

A run of 6 helical transmembrane segments spans residues 36–56 (LYPFIGLIIGILWYLSFFVLS), 60–80 (VPIMLMAALILTVPYILTGFL), 110–130 (VGAFSVISVVLLLLVEFAGIF), 181–201 (EIILLGIYVLVALITFFTLGI), 202–222 (NYLIAILAMGLISFILLLKVK), and 231–251 (DVAGYILVLMEFTGILLLGII).

This sequence belongs to the CobS family. Requires Mg(2+) as cofactor.

It localises to the cell membrane. It carries out the reaction alpha-ribazole + adenosylcob(III)inamide-GDP = adenosylcob(III)alamin + GMP + H(+). It catalyses the reaction alpha-ribazole 5'-phosphate + adenosylcob(III)inamide-GDP = adenosylcob(III)alamin 5'-phosphate + GMP + H(+). It functions in the pathway cofactor biosynthesis; adenosylcobalamin biosynthesis; adenosylcobalamin from cob(II)yrinate a,c-diamide: step 7/7. Functionally, joins adenosylcobinamide-GDP and alpha-ribazole to generate adenosylcobalamin (Ado-cobalamin). Also synthesizes adenosylcobalamin 5'-phosphate from adenosylcobinamide-GDP and alpha-ribazole 5'-phosphate. The chain is Adenosylcobinamide-GDP ribazoletransferase from Clostridium perfringens (strain SM101 / Type A).